A 299-amino-acid chain; its full sequence is Taste receptor type 2 member 1 (299 aa).

Topologically, residues 1-9 (MLESHLIIY) are extracellular. A helical transmembrane segment spans residues 10 to 30 (FLLAVIQFLLGTFTNGIIVVV). Topologically, residues 31–55 (NGIDLIKHRKMAPLDLLLSCLAVSR) are cytoplasmic. Residues 56–76 (IFLQLFIFYINVVVIFLIEFI) traverse the membrane as a helical segment. The Extracellular segment spans residues 77-81 (TCSAS). The helical transmembrane segment at 82–102 (CAFLVFVNELELWLATWLGVF) threads the bilayer. The Cytoplasmic segment spans residues 103 to 124 (YCAKVASVLHPLFIWLKMRISK). A helical transmembrane segment spans residues 125–145 (SVPWMILGSLLYVSMICIFHI). Over 146 to 178 (KYTGFMVPYFLRNLFFQNATIQTEVKQAIQIFS) the chain is Extracellular. An N-linked (GlcNAc...) asparagine glycan is attached at N163. A helical transmembrane segment spans residues 179–199 (FVAELLVPLLIFLVAVLLLIF). At 200-222 (SLGRHTRQMRNTVAGSRVPGRGA) the chain is on the cytoplasmic side. A helical membrane pass occupies residues 223 to 243 (HISALLSILSFLILYISHYLI). Topologically, residues 244–257 (KTFLSSLKFHVKRF) are extracellular. The chain crosses the membrane as a helical span at residues 258–278 (VFLFCILVIGTYPSGHSLILI). Over 279–299 (LGNPKLKQNTKKFLCHSKCCQ) the chain is Cytoplasmic.

This sequence belongs to the G-protein coupled receptor T2R family.

The protein localises to the membrane. Its function is as follows. Receptor that may play a role in the perception of bitterness and is gustducin-linked. May play a role in sensing the chemical composition of the gastrointestinal content. The activity of this receptor may stimulate alpha gustducin, mediate PLC-beta-2 activation and lead to the gating of TRPM5. The chain is Taste receptor type 2 member 1 (TAS2R1) from Chlorocebus aethiops (Green monkey).